The chain runs to 146 residues: Hemoglobin subunit beta (146 aa).

The region spanning histidine 2–histidine 146 is the Globin domain. Heme b is bound by residues histidine 63 and histidine 92.

The protein belongs to the globin family. In terms of assembly, heterotetramer of two alpha chains and two beta chains. As to expression, red blood cells.

Functionally, involved in oxygen transport from the lung to the various peripheral tissues. This Psittacula krameri (Rose-ringed parakeet) protein is Hemoglobin subunit beta (HBB).